The primary structure comprises 592 residues: Putative RING finger protein ORF9 (592 aa).

An RING-type zinc finger spans residues 12–49 (CCICLEEDIERVDTIPCQHTVCRPCYLKPMINKCPVCR). The stretch at 414-441 (WELIKREELLQRRYKREEQNLKYTSNRL) forms a coiled coil.

This chain is Putative RING finger protein ORF9, found in Ostreid herpesvirus 1 (isolate France) (OsHV-1).